The chain runs to 413 residues: Gamma-glutamyl phosphate reductase (413 aa).

Belongs to the gamma-glutamyl phosphate reductase family.

The protein resides in the cytoplasm. It carries out the reaction L-glutamate 5-semialdehyde + phosphate + NADP(+) = L-glutamyl 5-phosphate + NADPH + H(+). The protein operates within amino-acid biosynthesis; L-proline biosynthesis; L-glutamate 5-semialdehyde from L-glutamate: step 2/2. Its function is as follows. Catalyzes the NADPH-dependent reduction of L-glutamate 5-phosphate into L-glutamate 5-semialdehyde and phosphate. The product spontaneously undergoes cyclization to form 1-pyrroline-5-carboxylate. This Lactococcus lactis subsp. lactis (strain IL1403) (Streptococcus lactis) protein is Gamma-glutamyl phosphate reductase.